The sequence spans 518 residues: Allene oxide synthase, chloroplastic (518 aa).

The N-terminal 33 residues, 1–33, are a transit peptide targeting the chloroplast; the sequence is MASISTPFPISLHPKTVRSKPLKFRVLTRPIKA. K133, H164, and K168 together coordinate heme b. (13S)-hydroperoxy-(9Z,11E)-octadecadienoate-binding residues include N321 and T389. 2 residues coordinate (13S)-hydroperoxy-(9Z,11E,15Z)-octadecatrienoate: N321 and T389. Heme b is bound by residues K469 and C471.

The protein belongs to the cytochrome P450 family. It depends on heme b as a cofactor.

It localises to the plastid. Its subcellular location is the chloroplast. It is found in the plastoglobule. It catalyses the reaction (13S)-hydroperoxy-(9Z,11E,15Z)-octadecatrienoate = (9Z,13S,15Z)-12,13-epoxyoctadeca-9,11,15-trienoate + H2O. The catalysed reaction is (13S)-hydroperoxy-(9Z,11E)-octadecadienoate = (9Z,13S)-12,13-epoxyoctadeca-9,11-dienoate + H2O. It participates in lipid metabolism; oxylipin biosynthesis. Functionally, cytochrome P450 enzyme involved in the biosynthesis of oxylipin jasmonates, important phytohormones acting as growth regulators and signaling molecules for plant defense. Functions as an allene oxide synthase that converts hydroperoxy fatty acids to unstable allene epoxides. Catalyzes the dehydration of 13-HPOTE ((13S)-hydroperoxy-(9Z,11E,15Z)-octadecatrienoate), as well as 13-HPODE ((13S)-hydroperoxy-(9Z,11E)-octadecadienoate). The chain is Allene oxide synthase, chloroplastic (CYP74A) from Arabidopsis thaliana (Mouse-ear cress).